Here is a 176-residue protein sequence, read N- to C-terminus: Nucleoside triphosphate/diphosphate phosphatase (176 aa).

Arg23 acts as the Proton donor in catalysis. Residues Asn87, Asp103, Asp105, Asp107, Asp120, and Glu123 each coordinate Mg(2+).

The protein belongs to the Ntdp family. The cofactor is Mg(2+).

It catalyses the reaction a ribonucleoside 5'-triphosphate + H2O = a ribonucleoside 5'-diphosphate + phosphate + H(+). It carries out the reaction a ribonucleoside 5'-diphosphate + H2O = a ribonucleoside 5'-phosphate + phosphate + H(+). Its function is as follows. Has nucleoside phosphatase activity towards nucleoside triphosphates and nucleoside diphosphates. The sequence is that of Nucleoside triphosphate/diphosphate phosphatase (yjjG) from Lactococcus lactis subsp. lactis (strain IL1403) (Streptococcus lactis).